The following is a 660-amino-acid chain: Bifunctional polymyxin resistance protein ArnA (660 aa).

A formyltransferase ArnAFT region spans residues 1–304; the sequence is MKAVIFAYHD…TLGLVAGARL (304 aa). Catalysis depends on H104, which acts as the Proton donor; for formyltransferase activity. Residues R114 and 136–140 each bind (6R)-10-formyltetrahydrofolate; that span reads VKRAD. The interval 314-660 is dehydrogenase ArnADH; it reads RRIRVLILGV…RSVDIAERAS (347 aa). Residues D347 and 368–369 contribute to the NAD(+) site; that span reads DI. Residues A393, Y398, and 432–433 contribute to the UDP-alpha-D-glucuronate site; that span reads TS. The active-site Proton acceptor; for decarboxylase activity is E434. Residues R460, N492, 526-535, and Y613 each bind UDP-alpha-D-glucuronate; that span reads KLIDGGQQKR. The active-site Proton donor; for decarboxylase activity is R619.

This sequence in the N-terminal section; belongs to the Fmt family. UDP-L-Ara4N formyltransferase subfamily. It in the C-terminal section; belongs to the NAD(P)-dependent epimerase/dehydratase family. UDP-glucuronic acid decarboxylase subfamily. In terms of assembly, homohexamer, formed by a dimer of trimers.

The catalysed reaction is UDP-alpha-D-glucuronate + NAD(+) = UDP-beta-L-threo-pentopyranos-4-ulose + CO2 + NADH. It carries out the reaction UDP-4-amino-4-deoxy-beta-L-arabinose + (6R)-10-formyltetrahydrofolate = UDP-4-deoxy-4-formamido-beta-L-arabinose + (6S)-5,6,7,8-tetrahydrofolate + H(+). Its pathway is nucleotide-sugar biosynthesis; UDP-4-deoxy-4-formamido-beta-L-arabinose biosynthesis; UDP-4-deoxy-4-formamido-beta-L-arabinose from UDP-alpha-D-glucuronate: step 1/3. It functions in the pathway nucleotide-sugar biosynthesis; UDP-4-deoxy-4-formamido-beta-L-arabinose biosynthesis; UDP-4-deoxy-4-formamido-beta-L-arabinose from UDP-alpha-D-glucuronate: step 3/3. It participates in bacterial outer membrane biogenesis; lipopolysaccharide biosynthesis. Functionally, bifunctional enzyme that catalyzes the oxidative decarboxylation of UDP-glucuronic acid (UDP-GlcUA) to UDP-4-keto-arabinose (UDP-Ara4O) and the addition of a formyl group to UDP-4-amino-4-deoxy-L-arabinose (UDP-L-Ara4N) to form UDP-L-4-formamido-arabinose (UDP-L-Ara4FN). The modified arabinose is attached to lipid A and is required for resistance to polymyxin and cationic antimicrobial peptides. This is Bifunctional polymyxin resistance protein ArnA from Salmonella schwarzengrund (strain CVM19633).